A 37-amino-acid chain; its full sequence is Brevinin-2DYe (37 aa).

A disulfide bridge links Cys-31 with Cys-37.

As to expression, expressed by the skin glands.

It localises to the secreted. Antimicrobial peptide. Active against the Gram-positive bacterium S.aureus (MIC=15 uM) and the Gram-negative bacterium E.coli (MIC=30 uM). The sequence is that of Brevinin-2DYe from Rana dybowskii (Dybovsky's frog).